Reading from the N-terminus, the 589-residue chain is Peptide transporter PTR_A (589 aa).

Residues Met1–Gly56 are disordered. Positions Asp19–Asn42 are enriched in basic and acidic residues. The next 4 membrane-spanning stretches (helical) occupy residues Ile74–Leu95, Ala124–Ala144, Ala153–Ile173, and Asn180–Val200. The N-linked (GlcNAc...) asparagine glycan is linked to Asn233. The next 8 membrane-spanning stretches (helical) occupy residues Ile236 to Ala256, Phe266 to Leu286, Val345 to Ile365, Ile388 to Ile408, Ile420 to Phe440, Ile467 to Thr487, Ser502 to Leu522, and Trp533 to Phe553.

The protein belongs to the major facilitator superfamily. Proton-dependent oligopeptide transporter (POT/PTR) (TC 2.A.17) family.

Its subcellular location is the cell membrane. The enzyme catalyses a dipeptide(out) + H(+)(out) = a dipeptide(in) + H(+)(in). The catalysed reaction is an L-amino acid tripeptide(out) + H(+)(out) = an L-amino acid tripeptide(in) + H(+)(in). Functionally, peptide transporter that exploits the inwardly directed proton motive force to facilitate the cellular uptake of di/tripeptides. This Candidozyma auris (Yeast) protein is Peptide transporter PTR_A.